Here is a 362-residue protein sequence, read N- to C-terminus: Phosphoserine aminotransferase (362 aa).

Residue R42 coordinates L-glutamate. Pyridoxal 5'-phosphate contacts are provided by residues 76 to 77, W102, T152, D172, and Q195; that span reads AR. The residue at position 196 (K196) is an N6-(pyridoxal phosphate)lysine. Residue 237-238 coordinates pyridoxal 5'-phosphate; sequence NT.

This sequence belongs to the class-V pyridoxal-phosphate-dependent aminotransferase family. SerC subfamily. In terms of assembly, homodimer. It depends on pyridoxal 5'-phosphate as a cofactor.

The protein resides in the cytoplasm. The enzyme catalyses O-phospho-L-serine + 2-oxoglutarate = 3-phosphooxypyruvate + L-glutamate. The catalysed reaction is 4-(phosphooxy)-L-threonine + 2-oxoglutarate = (R)-3-hydroxy-2-oxo-4-phosphooxybutanoate + L-glutamate. Its pathway is amino-acid biosynthesis; L-serine biosynthesis; L-serine from 3-phospho-D-glycerate: step 2/3. It functions in the pathway cofactor biosynthesis; pyridoxine 5'-phosphate biosynthesis; pyridoxine 5'-phosphate from D-erythrose 4-phosphate: step 3/5. Catalyzes the reversible conversion of 3-phosphohydroxypyruvate to phosphoserine and of 3-hydroxy-2-oxo-4-phosphonooxybutanoate to phosphohydroxythreonine. This is Phosphoserine aminotransferase from Haemophilus influenzae (strain ATCC 51907 / DSM 11121 / KW20 / Rd).